A 382-amino-acid chain; its full sequence is Flavin-dependent monooxygenase, oxygenase subunit HsaA (382 aa).

FMN contacts are provided by residues Trp72, Ser106–Tyr108, Trp129–Ser131, Arg251, Ala334–Thr335, and His356–Ala357.

It belongs to the HpaH/HsaA monooxygenase family. As to quaternary structure, homotetramer. HsaAB monooxygenase consists of an oxygenase component HsaA and a reductase component HsaB.

It catalyses the reaction 3-hydroxy-9,10-secoandrosta-1,3,5(10)-triene-9,17-dione + FMNH2 + O2 = 3,4-dihydroxy-9,10-secoandrosta-1,3,5(10)-triene-9,17-dione + FMN + H2O + H(+). It functions in the pathway lipid metabolism; steroid biosynthesis. Catalyzes the o-hydroxylation of 3-hydroxy-9,10-secoandrosta-1,3,5(10)-triene-9,17-dione (3-HSA) to 3,4-dihydroxy-9,10-secoandrosta-1,3,5(10)-triene-9,17-dione (3,4-DHSA) in the catabolism of cholesterol. In Rhodococcus jostii (strain RHA1), this protein is Flavin-dependent monooxygenase, oxygenase subunit HsaA (hsaA).